Consider the following 352-residue polypeptide: Lipid storage droplets surface-binding protein 2 (352 aa).

2 disordered regions span residues 1 to 28 (MASAEQKHATGNGTTGNGTAMNDVDQPK) and 298 to 352 (NVEQ…VSSQ). Over residues 298–309 (NVEQSGGSSSDA) the composition is skewed to polar residues. A compositionally biased stretch (low complexity) spans 315–329 (TTTSTTTTTTTSSTS).

Belongs to the perilipin family. As to expression, ubiquitous expression in early embryos. At stage 5 expression is restricted to the pole cells. At stage 11 expression is seen in the amnioserosa, refined to the fat body and midgut by stage 14. Also seen in the hindgut by the end of embryogenesis. Expression is seen in larval fat body (at protein level).

The protein localises to the cytoplasm. The protein resides in the lipid droplet. Functionally, essential for embryogenesis. Required for normal deposition of neutral lipids in the oocyte. This is Lipid storage droplets surface-binding protein 2 from Drosophila melanogaster (Fruit fly).